The following is a 227-amino-acid chain: Urease subunit gamma/beta (227 aa).

The urease gamma stretch occupies residues 1–101; it reads MRLTPTERDR…LAVVADPVGG (101 aa). Positions 102 to 227 are urease beta; the sequence is GGLGDDAPGA…AACGYLGADR (126 aa).

In the N-terminal section; belongs to the urease gamma subunit family. The protein in the C-terminal section; belongs to the urease beta subunit family. Heterohexamer of 3 UreC (alpha) and 3 UreAB (gamma/beta) subunits.

It localises to the cytoplasm. It catalyses the reaction urea + 2 H2O + H(+) = hydrogencarbonate + 2 NH4(+). Its pathway is nitrogen metabolism; urea degradation; CO(2) and NH(3) from urea (urease route): step 1/1. The protein is Urease subunit gamma/beta of Streptomyces coelicolor (strain ATCC BAA-471 / A3(2) / M145).